Here is a 105-residue protein sequence, read N- to C-terminus: Iron-sulfur cluster assembly protein CyaY (105 aa).

It belongs to the frataxin family.

Its function is as follows. Involved in iron-sulfur (Fe-S) cluster assembly. May act as a regulator of Fe-S biogenesis. This is Iron-sulfur cluster assembly protein CyaY from Chromobacterium violaceum (strain ATCC 12472 / DSM 30191 / JCM 1249 / CCUG 213 / NBRC 12614 / NCIMB 9131 / NCTC 9757 / MK).